The following is a 71-amino-acid chain: UPF0337 protein RPA4418 (71 aa).

A disordered region spans residues 1-54; the sequence is MGSTMDKIKGQANELAGKAKQGIGEATGSDKLKGEGAIQEAKGHGQQALGNAKD.

It belongs to the UPF0337 (CsbD) family.

The chain is UPF0337 protein RPA4418 from Rhodopseudomonas palustris (strain ATCC BAA-98 / CGA009).